Consider the following 520-residue polypeptide: GMP synthase [glutamine-hydrolyzing] (520 aa).

Residues 12 to 205 (KIIVLDYGSQ…AISICGGRGD (194 aa)) enclose the Glutamine amidotransferase type-1 domain. Cys89 (nucleophile) is an active-site residue. Active-site residues include His179 and Glu181. The GMPS ATP-PPase domain maps to 206–395 (WSMDNFIDMQ…LGMPDEVVWR (190 aa)). 233 to 239 (SGGVDSS) is a binding site for ATP.

As to quaternary structure, homodimer.

It carries out the reaction XMP + L-glutamine + ATP + H2O = GMP + L-glutamate + AMP + diphosphate + 2 H(+). The protein operates within purine metabolism; GMP biosynthesis; GMP from XMP (L-Gln route): step 1/1. Functionally, catalyzes the synthesis of GMP from XMP. This Streptococcus equi subsp. equi (strain 4047) protein is GMP synthase [glutamine-hydrolyzing].